The primary structure comprises 260 residues: MVLIKVLANHLILQLSYAQKSSELVIGGDECNINEHRFLVALYHSRSRTFLCGGTLINQEWVLTAAHCDRFLMYIRLGMHNKNVKFDDEQRRFPKEKYFFACSNNFTKWDKDIMLIRLNRPVNNSEHIAPLSLPSNPPSVGSVCRVMGWGTITSPNETLPDVPHCANINLLHYSVCQAAYPKLPVTRRLLCAGILEGGIDSCHRDSGGPLICNGQFQGIVSWGRYPCAQPRVPGIYIKVFDYTDWIQSIIAGNTAVNCPP.

The N-terminal stretch at 1–18 (MVLIKVLANHLILQLSYA) is a signal peptide. The propeptide occupies 19–24 (QKSSEL). Residues 25–251 (VIGGDECNIN…YTDWIQSIIA (227 aa)) form the Peptidase S1 domain. 6 disulfides stabilise this stretch: C31–C165, C52–C68, C102–C258, C144–C212, C176–C191, and C202–C227. The Charge relay system role is filled by H67. The N-linked (GlcNAc...) asparagine glycan is linked to N105. D112 serves as the catalytic Charge relay system. 2 N-linked (GlcNAc...) asparagine glycosylation sites follow: N123 and N156. Residue S206 is the Charge relay system of the active site.

Belongs to the peptidase S1 family. Snake venom subfamily. As to quaternary structure, monomer. In terms of tissue distribution, expressed by the venom gland.

It localises to the secreted. In terms of biological role, snake venom serine protease that may act in the hemostasis system of the prey. The sequence is that of Snake venom serine protease salmobin from Gloydius halys (Chinese water mocassin).